We begin with the raw amino-acid sequence, 318 residues long: Probable cell division protein WhiA (318 aa).

A DNA-binding region (H-T-H motif) is located at residues 276–310 (TLQELGEMVESGSISKSGINHRLRKIDQIADKIRN).

This sequence belongs to the WhiA family.

Functionally, involved in cell division and chromosome segregation. In Exiguobacterium sibiricum (strain DSM 17290 / CCUG 55495 / CIP 109462 / JCM 13490 / 255-15), this protein is Probable cell division protein WhiA.